The following is a 399-amino-acid chain: Elongation factor Tu (399 aa).

Residues 10–204 enclose the tr-type G domain; the sequence is KPHVNIGTIG…AVDTSIPEPE (195 aa). The tract at residues 19 to 26 is G1; sequence GHVDHGKT. 19 to 26 is a GTP binding site; that stretch reads GHVDHGKT. Residue Thr26 coordinates Mg(2+). The interval 60-64 is G2; it reads GITIN. The segment at 81 to 84 is G3; that stretch reads DCPG. Residues 81–85 and 136–139 each bind GTP; these read DCPGH and NKCD. The interval 136 to 139 is G4; that stretch reads NKCD. A G5 region spans residues 174–176; sequence SGL.

The protein belongs to the TRAFAC class translation factor GTPase superfamily. Classic translation factor GTPase family. EF-Tu/EF-1A subfamily. As to quaternary structure, monomer.

The protein localises to the cytoplasm. It carries out the reaction GTP + H2O = GDP + phosphate + H(+). Functionally, GTP hydrolase that promotes the GTP-dependent binding of aminoacyl-tRNA to the A-site of ribosomes during protein biosynthesis. The polypeptide is Elongation factor Tu (Prochlorococcus marinus (strain MIT 9303)).